The following is a 365-amino-acid chain: Mitogen-activated protein kinase HOG1 (365 aa).

One can recognise a Protein kinase domain in the interval 20 to 306 (YSDLQPVGMG…ATNALAHEYL (287 aa)). Residues 26-34 (VGMGAFGLV) and Lys-49 contribute to the ATP site. The active-site Proton acceptor is the Asp-148. Residues 178–180 (TGY) carry the TXY motif.

The protein belongs to the protein kinase superfamily. Ser/Thr protein kinase family. MAP kinase subfamily. HOG1 sub-subfamily. Requires Mg(2+) as cofactor.

The protein localises to the cytoplasm. It is found in the nucleus. The catalysed reaction is L-seryl-[protein] + ATP = O-phospho-L-seryl-[protein] + ADP + H(+). It catalyses the reaction L-threonyl-[protein] + ATP = O-phospho-L-threonyl-[protein] + ADP + H(+). Its function is as follows. Proline-directed serine/threonine-protein kinase involved in a signal transduction pathway that is activated by changes in the osmolarity of the extracellular environment. Controls osmotic regulation of transcription of target genes. Involved in environmental stress response, hyphal growth, conidiation and possibly secondary metabolism such as ustiloxin biosynthesis or the biosynthesis of other phytotoxic compounds that are inhibitory to rice shoot growth during seed germination. Plays a key role in responses to cell wall and membrane stresses but not oxidative stress. The protein is Mitogen-activated protein kinase HOG1 of Ustilaginoidea virens (Rice false smut fungus).